A 76-amino-acid chain; its full sequence is uncharacterized protein (76 aa).

The helical transmembrane segment at 53–70 (STKLHIIWFCIFAIFIAV) threads the bilayer.

The protein localises to the membrane. This is an uncharacterized protein from Haemophilus influenzae (strain ATCC 51907 / DSM 11121 / KW20 / Rd).